Here is a 198-residue protein sequence, read N- to C-terminus: E3 ubiquitin-protein ligase rnf152 (198 aa).

The RING-type zinc-finger motif lies at 12 to 55; sequence CQICFNYFSQRRLPKLLHCQHTCCSVCLSQMRLSQREIRCPWCR. Residues 162 to 182 form a helical membrane-spanning segment; the sequence is TGVCTVLLVAFILIFLLGIVL.

It belongs to the RNF152 family.

It localises to the lysosome membrane. It catalyses the reaction S-ubiquitinyl-[E2 ubiquitin-conjugating enzyme]-L-cysteine + [acceptor protein]-L-lysine = [E2 ubiquitin-conjugating enzyme]-L-cysteine + N(6)-ubiquitinyl-[acceptor protein]-L-lysine.. It functions in the pathway protein modification; protein ubiquitination. E3 ubiquitin-protein ligase that acts as a negative regulator of mTORC1 signaling by mediating ubiquitination of RagA/RRAGA and RHEB. Catalyzes 'Lys-63'-linked polyubiquitination of RagA/RRAGA in response to amino acid starvation, thereby regulating mTORC1 signaling. Also mediates monoubiquitination of RHEB, promoting its association with the TSC-TBC complex and subsequent inhibition. Also mediates 'Lys-48'-linked polyubiquitination of target proteins and their subsequent targeting to the proteasome for degradation. In Danio rerio (Zebrafish), this protein is E3 ubiquitin-protein ligase rnf152.